A 186-amino-acid polypeptide reads, in one-letter code: TATA-box-binding protein F (186 aa).

Tandem repeats lie at residues 10 to 86 (IENV…FDDL) and 101 to 179 (VQNI…NDRL).

It belongs to the TBP family.

In terms of biological role, general factor that plays a role in the activation of archaeal genes transcribed by RNA polymerase. Binds specifically to the TATA box promoter element which lies close to the position of transcription initiation. This is TATA-box-binding protein F (tbpF) from Halobacterium salinarum (strain ATCC 700922 / JCM 11081 / NRC-1) (Halobacterium halobium).